Reading from the N-terminus, the 457-residue chain is Casein kinase 1-like protein 11 (457 aa).

A Protein kinase domain is found at 15–284 (FKLGRKLGSG…LRRLFRDLFI (270 aa)). ATP contacts are provided by residues 21–29 (LGSGSFGEL) and Lys-44. The active-site Proton acceptor is Asp-134. Disordered stretches follow at residues 305–337 (GSSS…GQDL) and 352–442 (NVSS…EDAI). Positions 311 to 324 (RPTPRPALDPPGPP) are enriched in pro residues. 2 stretches are compositionally biased toward polar residues: residues 383 to 403 (NGST…SAEP) and 409 to 429 (SRLF…QSYE).

The protein belongs to the protein kinase superfamily. CK1 Ser/Thr protein kinase family. Casein kinase I subfamily. As to quaternary structure, monomer. Post-translationally, autophosphorylated.

Its subcellular location is the cytoplasm. The protein resides in the nucleus. It catalyses the reaction L-seryl-[protein] + ATP = O-phospho-L-seryl-[protein] + ADP + H(+). It carries out the reaction L-threonyl-[protein] + ATP = O-phospho-L-threonyl-[protein] + ADP + H(+). Its activity is regulated as follows. Partially inhibited by N-(2-aminoethyl)-5-chloroisoquinoline-8-sulfonamide (CKI-7). Casein kinases are operationally defined by their preferential utilization of acidic proteins such as caseins as substrates. Can phosphorylate casein, phosvitin, myosin light chains and poly(Glu,Tyr) in vitro. The protein is Casein kinase 1-like protein 11 of Arabidopsis thaliana (Mouse-ear cress).